We begin with the raw amino-acid sequence, 729 residues long: Fatty acid oxidation complex subunit alpha (729 aa).

The interval 1-189 (MLYKGDTLYL…KIGLVDGVVK (189 aa)) is enoyl-CoA hydratase/isomerase. Aspartate 296 serves as a coordination point for substrate. The interval 311 to 729 (ETPKQAAVLG…ARPVGSLKTA (419 aa)) is 3-hydroxyacyl-CoA dehydrogenase. NAD(+) is bound by residues methionine 324, aspartate 343, 400-402 (VVE), lysine 407, and serine 429. The active-site For 3-hydroxyacyl-CoA dehydrogenase activity is the histidine 450. Asparagine 453 serves as a coordination point for NAD(+). Substrate contacts are provided by asparagine 500 and tyrosine 660. Residues 708 to 729 (RHNEPYYPPVEPARPVGSLKTA) are disordered.

This sequence in the N-terminal section; belongs to the enoyl-CoA hydratase/isomerase family. It in the C-terminal section; belongs to the 3-hydroxyacyl-CoA dehydrogenase family. As to quaternary structure, heterotetramer of two alpha chains (FadB) and two beta chains (FadA).

The enzyme catalyses a (3S)-3-hydroxyacyl-CoA + NAD(+) = a 3-oxoacyl-CoA + NADH + H(+). The catalysed reaction is a (3S)-3-hydroxyacyl-CoA = a (2E)-enoyl-CoA + H2O. It carries out the reaction a 4-saturated-(3S)-3-hydroxyacyl-CoA = a (3E)-enoyl-CoA + H2O. It catalyses the reaction (3S)-3-hydroxybutanoyl-CoA = (3R)-3-hydroxybutanoyl-CoA. The enzyme catalyses a (3Z)-enoyl-CoA = a 4-saturated (2E)-enoyl-CoA. The catalysed reaction is a (3E)-enoyl-CoA = a 4-saturated (2E)-enoyl-CoA. The protein operates within lipid metabolism; fatty acid beta-oxidation. Its function is as follows. Involved in the aerobic and anaerobic degradation of long-chain fatty acids via beta-oxidation cycle. Catalyzes the formation of 3-oxoacyl-CoA from enoyl-CoA via L-3-hydroxyacyl-CoA. It can also use D-3-hydroxyacyl-CoA and cis-3-enoyl-CoA as substrate. The protein is Fatty acid oxidation complex subunit alpha of Salmonella gallinarum (strain 287/91 / NCTC 13346).